Consider the following 234-residue polypeptide: Small ribosomal subunit protein eS4 (234 aa).

The S4 RNA-binding domain maps to 39-102 (MPLVVVLRDL…NANYRVVIGM (64 aa)).

Belongs to the eukaryotic ribosomal protein eS4 family.

The chain is Small ribosomal subunit protein eS4 from Methanocella arvoryzae (strain DSM 22066 / NBRC 105507 / MRE50).